Here is a 430-residue protein sequence, read N- to C-terminus: Aspartate aminotransferase, mitochondrial (430 aa).

The N-terminal 29 residues, 1-29, are a transit peptide targeting the mitochondrion; it reads MALLHSGRALPGIAAAFHPGLAAAASARA. Residue Thr-48 is modified to Phosphothreonine. Lys-59 is subject to N6-acetyllysine. Gly-65 contacts substrate. Lys-73 carries the N6-acetyllysine; alternate modification. An N6-succinyllysine; alternate modification is found at Lys-73. An N6-acetyllysine modification is found at Lys-82. Position 90 is an N6-acetyllysine; alternate (Lys-90). An N6-succinyllysine; alternate modification is found at Lys-90. Tyr-96 carries the 3'-nitrotyrosine; alternate modification. Position 96 is a phosphotyrosine; alternate (Tyr-96). N6-acetyllysine; alternate is present on residues Lys-107 and Lys-122. Residues Lys-107 and Lys-122 each carry the N6-succinyllysine; alternate modification. Ser-143 bears the Phosphoserine mark. Lys-159 is subject to N6-acetyllysine; alternate. The residue at position 159 (Lys-159) is an N6-succinyllysine; alternate. Trp-162 serves as a coordination point for substrate. Lys-185 is modified (N6-acetyllysine; alternate). Lys-185 bears the N6-succinyllysine; alternate mark. Residue Asn-215 coordinates substrate. N6-succinyllysine is present on Lys-227. Lys-234 bears the N6-acetyllysine mark. N6-acetyllysine; alternate occurs at positions 279 and 296. The residue at position 279 (Lys-279) is an N6-(pyridoxal phosphate)lysine; alternate. Lys-296 is modified (N6-succinyllysine; alternate). At Lys-302 the chain carries N6-acetyllysine. Lys-309 bears the N6-acetyllysine; alternate mark. Lys-309 bears the N6-succinyllysine; alternate mark. An Asymmetric dimethylarginine modification is found at Arg-313. Thr-333 carries the phosphothreonine modification. N6-acetyllysine; alternate is present on Lys-338. Lys-338 carries the N6-succinyllysine; alternate modification. Lys-345 bears the N6-acetyllysine mark. Residue Lys-363 is modified to N6-acetyllysine; alternate. Lys-363 carries the post-translational modification N6-succinyllysine; alternate. N6-acetyllysine is present on residues Lys-364 and Lys-387. N6-acetyllysine; alternate is present on residues Lys-396 and Lys-404. Residues Lys-396 and Lys-404 each carry the N6-succinyllysine; alternate modification. Arg-407 is a substrate binding site.

Belongs to the class-I pyridoxal-phosphate-dependent aminotransferase family. In terms of assembly, homodimer. It depends on pyridoxal 5'-phosphate as a cofactor.

Its subcellular location is the mitochondrion matrix. It localises to the cell membrane. The catalysed reaction is L-aspartate + 2-oxoglutarate = oxaloacetate + L-glutamate. The enzyme catalyses L-kynurenine + 2-oxoglutarate = kynurenate + L-glutamate + H2O. Catalyzes the irreversible transamination of the L-tryptophan metabolite L-kynurenine to form kynurenic acid (KA). As a member of the malate-aspartate shuttle, it has a key role in the intracellular NAD(H) redox balance. Is important for metabolite exchange between mitochondria and cytosol, and for amino acid metabolism. Facilitates cellular uptake of long-chain free fatty acids. This chain is Aspartate aminotransferase, mitochondrial (GOT2), found in Pongo abelii (Sumatran orangutan).